Here is a 422-residue protein sequence, read N- to C-terminus: Solanesyl diphosphate synthase 3, chloroplastic/mitochondrial (422 aa).

Residues 1-32 (MLFTRSVARISSKFLRNRSFYGSSQSLASHRF) constitute a chloroplast and mitochondrion transit peptide. Isopentenyl diphosphate contacts are provided by Lys125, Arg128, and His174. Asp181 and Asp185 together coordinate Mg(2+). Arg190 contributes to the an all-trans-polyprenyl diphosphate binding site. Position 191 (Arg191) interacts with isopentenyl diphosphate. Residues Lys267, Thr268, Gln305, and Lys322 each contribute to the an all-trans-polyprenyl diphosphate site.

This sequence belongs to the FPP/GGPP synthase family. Homodimer. Mg(2+) serves as cofactor. As to expression, ubiquitous. Highest expression in seeds and shoot apical meristem.

The protein localises to the plastid. Its subcellular location is the chloroplast. The protein resides in the mitochondrion. The catalysed reaction is 5 isopentenyl diphosphate + (2E,6E,10E)-geranylgeranyl diphosphate = all-trans-nonaprenyl diphosphate + 5 diphosphate. May be involved in the supply of solanesyl diphosphate for ubiquinone-9 (UQ-9) biosynthesis in mitochondria. Synthesizes C25 to C45 medium / long-chain products depending on the type of substrate available. Can use geranyl diphosphate, farnesyl diphosphate or geranylgeranyl diphosphate as substrates, but not dimethylallyl diphosphate. In Arabidopsis thaliana (Mouse-ear cress), this protein is Solanesyl diphosphate synthase 3, chloroplastic/mitochondrial.